A 39-amino-acid polypeptide reads, in one-letter code: Photosystem I reaction center subunit IX (39 aa).

The chain crosses the membrane as a helical span at residues 7–27 (FLTTAPVAFILFSSFVFALFI).

Belongs to the PsaJ family.

The protein localises to the cellular thylakoid membrane. Functionally, may help in the organization of the PsaE and PsaF subunits. The protein is Photosystem I reaction center subunit IX of Synechococcus sp. (strain JA-3-3Ab) (Cyanobacteria bacterium Yellowstone A-Prime).